A 543-amino-acid polypeptide reads, in one-letter code: MEPDVVEIPPPPLIASGSRTRKPRKAVPEVIDVESYEFRNVGVVKDNNVVDKKNKGKAIQVDSFSFNNVQSHHHGSSLLNLETFQDYYGHKNIPFSEFANQPIDVDDYSMYQDVLDPKDVPAGAEVTVPWGLNSSSKGTAKSSISIMRSQSMKGYGTVSLATTNVPQLWDYTLPQQNQAIYSSVSFSAVQPQTPDVVMVTNPTPNPFSYDASASSSHPIAAEPISSVQDSSNARKLKEEFLRDFKRFDTVEDFSDHHYASKGKSSKQHSKNWVKKVQADWKILENDLPEAISVRACESRMDLLRAVIIGAEGTPYHDGLFFFDIQFPDTYPSVPPNVHYHSGGLRINPNLYNCGKVCLSLLGTWAGSAREKWLPNESTMLQLLVSIQALILNEKPYFNEPGYVQSAGTASGESKSKVYSENVFLLSLKTMVYSIRRPPQHFEEYVQNHYFVRSHDIVKACNAYKAGAPLGSMVKGGVQDLEEARQSGSKKFKTDVASFMQTVVDEFVKLGVKELAEKPEPPMSNANTENQSKKKTRKRSRSSR.

The tract at residues 1–21 (MEPDVVEIPPPPLIASGSRTR) is disordered. A UBC core domain is found at 271-431 (NWVKKVQADW…VFLLSLKTMV (161 aa)). Catalysis depends on Cys-357, which acts as the Glycyl thioester intermediate. The segment at 514–543 (LAEKPEPPMSNANTENQSKKKTRKRSRSSR) is disordered. A compositionally biased stretch (basic residues) spans 532–543 (KKKTRKRSRSSR).

It belongs to the ubiquitin-conjugating enzyme family.

The enzyme catalyses S-ubiquitinyl-[E1 ubiquitin-activating enzyme]-L-cysteine + [E2 ubiquitin-conjugating enzyme]-L-cysteine = [E1 ubiquitin-activating enzyme]-L-cysteine + S-ubiquitinyl-[E2 ubiquitin-conjugating enzyme]-L-cysteine.. It functions in the pathway protein modification; protein ubiquitination. Accepts the ubiquitin from the E1 complex and catalyzes its covalent attachment to other proteins. This chain is Probable ubiquitin-conjugating enzyme E2 26 (UBC26), found in Arabidopsis thaliana (Mouse-ear cress).